The following is a 96-amino-acid chain: MYKDRDTNQRDSRFENQQDGFKKNSNFRFFKRKSCKFCDSGKHPDYKDFDFLKKFITEQGKILPKRITGTSAKHQRRLALEIKRARYMALLPFVKK.

It belongs to the bacterial ribosomal protein bS18 family. In terms of assembly, part of the 30S ribosomal subunit. Forms a tight heterodimer with protein bS6.

Its function is as follows. Binds as a heterodimer with protein bS6 to the central domain of the 16S rRNA, where it helps stabilize the platform of the 30S subunit. The sequence is that of Small ribosomal subunit protein bS18 from Borreliella burgdorferi (strain ATCC 35210 / DSM 4680 / CIP 102532 / B31) (Borrelia burgdorferi).